Consider the following 1025-residue polypeptide: Adenylate-forming reductase 03009 (1025 aa).

Positions 38–422 (FEFHAKSNPQ…LGRIDNQVKI (385 aa)) are adenylation (A) domain. AMP is bound by residues 332–333 (VT) and 412–415 (HLGR). The tract at residues 556 to 638 (SLGSTNTKIS…AILIWICVKK (83 aa)) is thiolation and peptide carrier (T) domain. Residues 682-900 (FIRRTAARVY…PPTKLWVKGV (219 aa)) are thioester reductase (TR) domain. NADP(+)-binding positions include 685–688 (RTAA), 769–771 (SAL), and tyrosine 840.

It belongs to the adenylate-forming reductase family.

Its function is as follows. Adenylate-forming reductase, a natural product biosynthesis enzyme that resembles non-ribosomal peptide synthetases, yet serves to modify one substrate, rather than to condense two or more building blocks. The A-domain preferentially accepts L-serine, L-alanine and L-valine as substrates. The natural product of the enzyme is not yet known. The protein is Adenylate-forming reductase 03009 of Coprinopsis cinerea (strain Okayama-7 / 130 / ATCC MYA-4618 / FGSC 9003) (Inky cap fungus).